The following is a 67-amino-acid chain: DNA-directed RNA polymerase subunit omega (67 aa).

Belongs to the RNA polymerase subunit omega family. As to quaternary structure, the RNAP catalytic core consists of 2 alpha, 1 beta, 1 beta' and 1 omega subunit. When a sigma factor is associated with the core the holoenzyme is formed, which can initiate transcription.

The catalysed reaction is RNA(n) + a ribonucleoside 5'-triphosphate = RNA(n+1) + diphosphate. Functionally, promotes RNA polymerase assembly. Latches the N- and C-terminal regions of the beta' subunit thereby facilitating its interaction with the beta and alpha subunits. The protein is DNA-directed RNA polymerase subunit omega of Listeria monocytogenes serotype 4a (strain HCC23).